The chain runs to 158 residues: Regulator of sigma D (158 aa).

Belongs to the Rsd/AlgQ family. Interacts with RpoD.

It localises to the cytoplasm. Its function is as follows. Binds RpoD and negatively regulates RpoD-mediated transcription activation by preventing the interaction between the primary sigma factor RpoD with the catalytic core of the RNA polymerase and with promoter DNA. May be involved in replacement of the RNA polymerase sigma subunit from RpoD to RpoS during the transition from exponential growth to the stationary phase. The sequence is that of Regulator of sigma D from Escherichia coli O6:H1 (strain CFT073 / ATCC 700928 / UPEC).